The chain runs to 309 residues: Carbonic anhydrase 4 (309 aa).

The N-terminal stretch at 1–17 (MQLLLALLALAYVAPST) is a signal peptide. The Alpha-carbonic anhydrase domain occupies 20–282 (SHWCYEIQAK…LGNRQVFRSH (263 aa)). Disulfide bonds link Cys-23–Cys-35 and Cys-45–Cys-226. His-87 serves as the catalytic Proton donor/acceptor. Zn(2+) contacts are provided by His-114, His-116, and His-139. Residue Asn-193 is glycosylated (N-linked (GlcNAc...) asparagine). 222–223 (TT) contacts substrate. Residue Ser-281 is the site of GPI-anchor amidated serine attachment. Positions 282–309 (HASGRLLSLPLPTLLVPTLTCLVASFLH) are cleaved as a propeptide — removed in mature form.

It belongs to the alpha-carbonic anhydrase family. As to quaternary structure, interacts with SLC4A4. Zn(2+) serves as cofactor. In terms of processing, the N-terminus is blocked. Glycosylated. As to expression, present in kidney and lung. Also particularly abundant in brain, muscle, heart and liver. Not detected in skin or spleen.

It localises to the cell membrane. The catalysed reaction is hydrogencarbonate + H(+) = CO2 + H2O. Its activity is regulated as follows. Inhibited by acetazolamide. Its function is as follows. Catalyzes the reversible hydration of carbon dioxide into bicarbonate and protons and thus is essential to maintaining intracellular and extracellular pH. May stimulate the sodium/bicarbonate transporter activity of SLC4A4 that acts in pH homeostasis. It is essential for acid overload removal from the retina and retina epithelium, and acid release in the choriocapillaris in the choroid. The sequence is that of Carbonic anhydrase 4 (Ca4) from Rattus norvegicus (Rat).